The following is a 735-amino-acid chain: 1,4-alpha-glucan branching enzyme GlgB (735 aa).

The Nucleophile role is filled by Asp-414. Residue Glu-469 is the Proton donor of the active site.

This sequence belongs to the glycosyl hydrolase 13 family. GlgB subfamily. Monomer.

The enzyme catalyses Transfers a segment of a (1-&gt;4)-alpha-D-glucan chain to a primary hydroxy group in a similar glucan chain.. It functions in the pathway glycan biosynthesis; glycogen biosynthesis. In terms of biological role, catalyzes the formation of the alpha-1,6-glucosidic linkages in glycogen by scission of a 1,4-alpha-linked oligosaccharide from growing alpha-1,4-glucan chains and the subsequent attachment of the oligosaccharide to the alpha-1,6 position. The protein is 1,4-alpha-glucan branching enzyme GlgB of Burkholderia lata (strain ATCC 17760 / DSM 23089 / LMG 22485 / NCIMB 9086 / R18194 / 383).